An 87-amino-acid polypeptide reads, in one-letter code: Small ribosomal subunit protein bS20 (87 aa).

The interval 1-26 is disordered; the sequence is MANIKSAKKRAVQSEKRRKHNASRRS.

This sequence belongs to the bacterial ribosomal protein bS20 family.

Functionally, binds directly to 16S ribosomal RNA. This Yersinia enterocolitica serotype O:8 / biotype 1B (strain NCTC 13174 / 8081) protein is Small ribosomal subunit protein bS20.